The primary structure comprises 395 residues: Putative gustatory receptor 93b (395 aa).

Over 1–18 the chain is Cytoplasmic; it reads MSGLLVMPRILRCLNVSR. Residues 19–39 form a helical membrane-spanning segment; it reads ISAILLRSCFLYGTFFGVITF. The Extracellular portion of the chain corresponds to 40–89; it reads RIERKDSQLVAINRRGYLWICLVIRLLASCFYGYSYDAWSGQYEDMYLRA. A helical membrane pass occupies residues 90–110; it reads FFGFRLIGCLICSVIILVMQF. Over 111-153 the chain is Cytoplasmic; it reads WFGEELINLVNRFLQLFRRMQSLTNSPKNRFGDRAEFLLMFSK. The helical transmembrane segment at 154 to 174 threads the bilayer; sequence VFSLLFVFMAFRLMLSPWFLL. Topologically, residues 175-183 are extracellular; it reads TLVCDLYTS. A helical membrane pass occupies residues 184–204; that stretch reads VGTGMITHLCFVGYLSIGVLY. Residues 205–267 are Cytoplasmic-facing; it reads RDLNNYVDCQ…RSFQQLFDLP (63 aa). The helical transmembrane segment at 268-288 threads the bilayer; it reads LFLSLAQSLLAMSMVSYHAIL. Over 289 to 293 the chain is Extracellular; that stretch reads RRQYS. The chain crosses the membrane as a helical span at residues 294–314; it reads FNLWGLVIKLLIDVVLLTMSV. Residues 315 to 369 are Cytoplasmic-facing; the sequence is HSAVNGSRLIRRLSFENFYVTDSQSYHQKLELFLGRLQHQELRVFPLGLFEVSNE. Residues 370–390 form a helical membrane-spanning segment; the sequence is LTLFFLSAMVTYLVFLVQYGM. Topologically, residues 391-395 are extracellular; that stretch reads QSQQI.

This sequence belongs to the insect chemoreceptor superfamily. Gustatory receptor (GR) family. Gr93a subfamily. In terms of tissue distribution, in larvae, is expressed in neurons of the terminal external chemosensory organ and of the dorsal pharyngeal sense organ.

The protein localises to the cell membrane. Functionally, probable gustatory receptor which mediates acceptance or avoidance behavior, depending on its substrates. This is Putative gustatory receptor 93b (Gr93b) from Drosophila melanogaster (Fruit fly).